The sequence spans 460 residues: Bifunctional protein GlmU (460 aa).

The segment at 1 to 235 is pyrophosphorylase; it reads MALSAAIVLA…PLTVEGVNDR (235 aa). UDP-N-acetyl-alpha-D-glucosamine contacts are provided by residues 9–12, Lys-23, Gln-76, and 81–82; these read LAAG and GT. Position 109 (Asp-109) interacts with Mg(2+). Positions 146, 161, 176, and 233 each coordinate UDP-N-acetyl-alpha-D-glucosamine. Asn-233 serves as a coordination point for Mg(2+). The interval 236-256 is linker; it reads VQLAALSKTYNRRVCERWMRD. The segment at 257–460 is N-acetyltransferase; it reads GVTILDPETT…VEGWKPAWER (204 aa). UDP-N-acetyl-alpha-D-glucosamine contacts are provided by Arg-338 and Lys-356. His-368 acts as the Proton acceptor in catalysis. Residues Tyr-371 and Asn-382 each coordinate UDP-N-acetyl-alpha-D-glucosamine. Residues 391-392 and Ala-428 contribute to the acetyl-CoA site; that span reads NY.

In the N-terminal section; belongs to the N-acetylglucosamine-1-phosphate uridyltransferase family. It in the C-terminal section; belongs to the transferase hexapeptide repeat family. In terms of assembly, homotrimer. It depends on Mg(2+) as a cofactor.

It localises to the cytoplasm. It carries out the reaction alpha-D-glucosamine 1-phosphate + acetyl-CoA = N-acetyl-alpha-D-glucosamine 1-phosphate + CoA + H(+). The enzyme catalyses N-acetyl-alpha-D-glucosamine 1-phosphate + UTP + H(+) = UDP-N-acetyl-alpha-D-glucosamine + diphosphate. Its pathway is nucleotide-sugar biosynthesis; UDP-N-acetyl-alpha-D-glucosamine biosynthesis; N-acetyl-alpha-D-glucosamine 1-phosphate from alpha-D-glucosamine 6-phosphate (route II): step 2/2. It participates in nucleotide-sugar biosynthesis; UDP-N-acetyl-alpha-D-glucosamine biosynthesis; UDP-N-acetyl-alpha-D-glucosamine from N-acetyl-alpha-D-glucosamine 1-phosphate: step 1/1. The protein operates within bacterial outer membrane biogenesis; LPS lipid A biosynthesis. Catalyzes the last two sequential reactions in the de novo biosynthetic pathway for UDP-N-acetylglucosamine (UDP-GlcNAc). The C-terminal domain catalyzes the transfer of acetyl group from acetyl coenzyme A to glucosamine-1-phosphate (GlcN-1-P) to produce N-acetylglucosamine-1-phosphate (GlcNAc-1-P), which is converted into UDP-GlcNAc by the transfer of uridine 5-monophosphate (from uridine 5-triphosphate), a reaction catalyzed by the N-terminal domain. The sequence is that of Bifunctional protein GlmU from Bifidobacterium longum (strain DJO10A).